Consider the following 565-residue polypeptide: Deoxyribodipyrimidine photo-lyase, mitochondrial (565 aa).

The 152-residue stretch at Ser75–Ile226 folds into the Photolyase/cryptochrome alpha/beta domain. FAD contacts are provided by residues Tyr326 and Thr338–Ser342. Interaction with DNA stretches follow at residues Glu384–Tyr391 and Asn451–Arg452. Residue Asp482–Asp484 participates in FAD binding. A DNA-binding site is contributed by Gln514.

Belongs to the DNA photolyase class-1 family. In terms of assembly, monomer. FAD serves as cofactor. Requires (6R)-5,10-methylene-5,6,7,8-tetrahydrofolate as cofactor.

It is found in the nucleus. Its subcellular location is the mitochondrion. It carries out the reaction cyclobutadipyrimidine (in DNA) = 2 pyrimidine residues (in DNA).. Involved in repair of UV radiation-induced DNA damage. Catalyzes the light-dependent monomerization (300-600 nm) of cyclobutyl pyrimidine dimers (in cis-syn configuration), which are formed between adjacent bases on the same DNA strand upon exposure to ultraviolet radiation. The protein is Deoxyribodipyrimidine photo-lyase, mitochondrial (PHR1) of Saccharomyces cerevisiae (strain ATCC 204508 / S288c) (Baker's yeast).